Reading from the N-terminus, the 284-residue chain is Homeobox protein CDX-4 (284 aa).

2 disordered regions span residues 15 to 40 (PGTL…SPMP) and 120 to 155 (GGGT…SRHS). Gly residues predominate over residues 22–37 (GGDGTAGTGGTGGGGS). Residues 173–232 (KEKYRVVYTDHQRLELEKEFHCNRYITIQRKSELAVNLGLSERQVKIWFQNRRAKERKMI) constitute a DNA-binding region (homeobox). The segment covering 238 to 253 (QFENSGGSVQSDSDSI) has biased composition (polar residues). The segment at 238-259 (QFENSGGSVQSDSDSISPGELP) is disordered.

The protein belongs to the Caudal homeobox family.

It is found in the nucleus. The chain is Homeobox protein CDX-4 (CDX4) from Homo sapiens (Human).